Consider the following 200-residue polypeptide: Segregation and condensation protein B (200 aa).

This sequence belongs to the ScpB family. Homodimer. Homodimerization may be required to stabilize the binding of ScpA to the Smc head domains. Component of a cohesin-like complex composed of ScpA, ScpB and the Smc homodimer, in which ScpA and ScpB bind to the head domain of Smc. The presence of the three proteins is required for the association of the complex with DNA.

The protein localises to the cytoplasm. Functionally, participates in chromosomal partition during cell division. May act via the formation of a condensin-like complex containing Smc and ScpA that pull DNA away from mid-cell into both cell halves. The protein is Segregation and condensation protein B of Lactobacillus delbrueckii subsp. bulgaricus (strain ATCC 11842 / DSM 20081 / BCRC 10696 / JCM 1002 / NBRC 13953 / NCIMB 11778 / NCTC 12712 / WDCM 00102 / Lb 14).